The primary structure comprises 316 residues: Probable cell division protein WhiA (316 aa).

Residues 275–309 (TLKELGEMVSGGKISKSGINHRLRKIDEIAEKLRA) constitute a DNA-binding region (H-T-H motif).

Belongs to the WhiA family.

Its function is as follows. Involved in cell division and chromosome segregation. In Bacillus cereus (strain B4264), this protein is Probable cell division protein WhiA.